Reading from the N-terminus, the 102-residue chain is Putative defensin-like protein 298 (102 aa).

An N-terminal signal peptide occupies residues 1 to 29; it reads MSASKATMLILFALFLSDILLVSIPRAEA. Intrachain disulfides connect cysteine 35-cysteine 53, cysteine 41-cysteine 58, cysteine 46-cysteine 60, cysteine 74-cysteine 93, cysteine 80-cysteine 98, and cysteine 86-cysteine 100.

It belongs to the DEFL family.

The protein localises to the secreted. This is Putative defensin-like protein 298 from Arabidopsis thaliana (Mouse-ear cress).